The chain runs to 838 residues: Rho GTPase-activating protein 12 (838 aa).

Positions 10-72 constitute an SH3 domain; it reads AGQAYIEVEY…PAQYVKEVTR (63 aa). 2 stretches are compositionally biased toward polar residues: residues 155 to 172 and 189 to 198; these read GKFNSDSHSPKVSSQNRT and TSFSQEQSCD. The interval 155 to 239 is disordered; sequence GKFNSDSHSP…PPNQGRPDSP (85 aa). A Phosphoserine modification is found at S163. 3 positions are modified to phosphoserine: S199, S211, and S213. 2 positions are modified to phosphothreonine: T228 and T229. A Phosphoserine modification is found at S238. The residue at position 241 (Y241) is a Phosphotyrosine. A WW 1 domain is found at 263–296; sequence IQVNGEWETHKDSSGRCYYYNRTTQERTWKPPRW. Residues 291-302 are compositionally biased toward basic and acidic residues; sequence WKPPRWARDVST. The interval 291–346 is disordered; it reads WKPPRWARDVSTSRDFQSPGEQEPLSSEENYHSSCFSQSDSQCGSPPRGWSEELDE. The segment covering 303 to 334 has biased composition (polar residues); that stretch reads SRDFQSPGEQEPLSSEENYHSSCFSQSDSQCG. One can recognise a WW 2 domain in the interval 355-388; sequence DYTKEKWLKHVDDQGRQYYYSADGSRSEWELPKY. Residues 425–456 form a disordered region; that stretch reads DSNDKDSPTTTKLCLPENESPPTSSKHQDPGQ. The region spanning 466 to 567 is the PH domain; sequence KITENGKKVR…WFKVLSSTIN (102 aa). A compositionally biased stretch (acidic residues) spans 572–582; the sequence is EADEAAEEETP. Residues 572–620 are disordered; the sequence is EADEAAEEETPDSPGVEKHDKEKDQKELKKLRSMKGSSMDSSEQKKTKK. S584 bears the Phosphoserine mark. Residues 586 to 601 are compositionally biased toward basic and acidic residues; it reads GVEKHDKEKDQKELKK. The Rho-GAP domain occupies 648-836; that stretch reads SNLANLCQRE…LILLELSTVF (189 aa).

Its function is as follows. GTPase activator for the Rho-type GTPases by converting them to an inactive GDP-bound state. The sequence is that of Rho GTPase-activating protein 12 (Arhgap12) from Mus musculus (Mouse).